The sequence spans 339 residues: Phenylalanine--tRNA ligase alpha subunit (339 aa).

Glutamate 254 lines the Mg(2+) pocket.

This sequence belongs to the class-II aminoacyl-tRNA synthetase family. Phe-tRNA synthetase alpha subunit type 1 subfamily. In terms of assembly, tetramer of two alpha and two beta subunits. The cofactor is Mg(2+).

It is found in the cytoplasm. The catalysed reaction is tRNA(Phe) + L-phenylalanine + ATP = L-phenylalanyl-tRNA(Phe) + AMP + diphosphate + H(+). The chain is Phenylalanine--tRNA ligase alpha subunit from Clostridium tetani (strain Massachusetts / E88).